The following is a 255-amino-acid chain: Small ribosomal subunit protein eS1 (255 aa).

Residue A2 is modified to N-acetylalanine; partial.

Belongs to the eukaryotic ribosomal protein eS1 family. Component of the small ribosomal subunit. Mature ribosomes consist of a small (40S) and a large (60S) subunit. The 40S subunit contains about 33 different proteins and 1 molecule of RNA (18S). The 60S subunit contains about 49 different proteins and 3 molecules of RNA (25S, 5.8S and 5S).

The protein resides in the cytoplasm. This is Small ribosomal subunit protein eS1 from Candida glabrata (strain ATCC 2001 / BCRC 20586 / JCM 3761 / NBRC 0622 / NRRL Y-65 / CBS 138) (Yeast).